Here is a 350-residue protein sequence, read N- to C-terminus: Alcohol dehydrogenase 1 (350 aa).

Residues C44, T46, H67, C98, C101, C104, C112, and C154 each contribute to the Zn(2+) site. T46 and H67 together coordinate an alcohol. An NAD(+)-binding site is contributed by T46. Residues 178–182 (GAGGG), D202, K207, 271–273 (IGL), and R343 each bind NAD(+).

It belongs to the zinc-containing alcohol dehydrogenase family. In terms of assembly, homotetramer. Zn(2+) is required as a cofactor.

Its subcellular location is the cytoplasm. The protein resides in the secreted. The catalysed reaction is a primary alcohol + NAD(+) = an aldehyde + NADH + H(+). The enzyme catalyses a secondary alcohol + NAD(+) = a ketone + NADH + H(+). In Emericella nidulans (strain FGSC A4 / ATCC 38163 / CBS 112.46 / NRRL 194 / M139) (Aspergillus nidulans), this protein is Alcohol dehydrogenase 1 (alcA).